Reading from the N-terminus, the 317-residue chain is MNTGIRKDHLRKGETVSWYNSVIAGSVSGVFARMATAPMDTVKIRYQLQPVQEDKYKGIASTVRTIMKEEGLRALWKGNIPATAMYVVYGAVQFGSYSWFNNVWSAKFPRFSQQGQTLTVGALAGMTSSVVSYPLDLLRTRLIANRTSHRTSVAEECRQMWLNEGVRGFFTGISTAMTTVTLSTAIMFLTYETVNIVCENHEKEFWSRPVSASSGIIAGFVSKTMVFPIDTLRRRMQVMNSKRTVHFTKFPAVYHEYRYKSSTAIIYKILRQEGVSALYRGLTMGLCKSVPTTAISLFVYERTMDLFDHGQRWGRSP.

Helical transmembrane passes span 15 to 37 (TVSW…MATA), 80 to 100 (IPAT…YSWF), 118 to 138 (LTVG…LDLL), 168 to 190 (GFFT…MFLT), 205 to 227 (FWSR…TMVF), and 281 to 300 (GLTM…LFVY). Solcar repeat units follow at residues 16 to 103 (VSWY…FNNV), 112 to 197 (SQQG…VNIV), and 206 to 306 (WSRP…TMDL).

The protein belongs to the mitochondrial carrier (TC 2.A.29) family.

It is found in the mitochondrion inner membrane. Functionally, mitochondrial transporter that mediates uptake of thiamine pyrophosphate (ThPP) into mitochondria. The chain is Mitochondrial thiamine pyrophosphate carrier 1 (TPC1) from Kluyveromyces lactis (strain ATCC 8585 / CBS 2359 / DSM 70799 / NBRC 1267 / NRRL Y-1140 / WM37) (Yeast).